The primary structure comprises 97 residues: Large ribosomal subunit protein uL23 (97 aa).

It belongs to the universal ribosomal protein uL23 family. In terms of assembly, part of the 50S ribosomal subunit. Contacts protein L29, and trigger factor when it is bound to the ribosome.

One of the early assembly proteins it binds 23S rRNA. One of the proteins that surrounds the polypeptide exit tunnel on the outside of the ribosome. Forms the main docking site for trigger factor binding to the ribosome. The sequence is that of Large ribosomal subunit protein uL23 from Brucella abortus (strain S19).